A 223-amino-acid polypeptide reads, in one-letter code: 2-C-methyl-D-erythritol 4-phosphate cytidylyltransferase (223 aa).

This sequence belongs to the IspD/TarI cytidylyltransferase family. IspD subfamily.

The enzyme catalyses 2-C-methyl-D-erythritol 4-phosphate + CTP + H(+) = 4-CDP-2-C-methyl-D-erythritol + diphosphate. Its pathway is isoprenoid biosynthesis; isopentenyl diphosphate biosynthesis via DXP pathway; isopentenyl diphosphate from 1-deoxy-D-xylulose 5-phosphate: step 2/6. Its function is as follows. Catalyzes the formation of 4-diphosphocytidyl-2-C-methyl-D-erythritol from CTP and 2-C-methyl-D-erythritol 4-phosphate (MEP). In Prochlorococcus marinus (strain MIT 9515), this protein is 2-C-methyl-D-erythritol 4-phosphate cytidylyltransferase.